Here is a 152-residue protein sequence, read N- to C-terminus: Putative aryl-alcohol dehydrogenase YFL057C (152 aa).

The protein belongs to the aldo/keto reductase family. Aldo/keto reductase 2 subfamily.

In terms of biological role, putative aryl-alcohol dehydrogenase. The protein is Putative aryl-alcohol dehydrogenase YFL057C of Saccharomyces cerevisiae (strain ATCC 204508 / S288c) (Baker's yeast).